A 430-amino-acid polypeptide reads, in one-letter code: Protein translocase subunit SecY (430 aa).

10 helical membrane-spanning segments follow: residues 18–38, 68–88, 117–137, 148–168, 179–199, 215–235, 270–290, 308–328, 368–388, and 390–410; these read IFFT…PAPG, FSIF…MQLL, FAII…NNYL, MSYL…LWLG, GISI…LIQF, LQVA…VYVL, VIPV…TMFF, NIGM…YAFV, FVGS…TKFM, and LPQS…VAIE.

Belongs to the SecY/SEC61-alpha family. Component of the Sec protein translocase complex. Heterotrimer consisting of SecY, SecE and SecG subunits. The heterotrimers can form oligomers, although 1 heterotrimer is thought to be able to translocate proteins. Interacts with the ribosome. Interacts with SecDF, and other proteins may be involved. Interacts with SecA.

It localises to the cell membrane. The central subunit of the protein translocation channel SecYEG. Consists of two halves formed by TMs 1-5 and 6-10. These two domains form a lateral gate at the front which open onto the bilayer between TMs 2 and 7, and are clamped together by SecE at the back. The channel is closed by both a pore ring composed of hydrophobic SecY resides and a short helix (helix 2A) on the extracellular side of the membrane which forms a plug. The plug probably moves laterally to allow the channel to open. The ring and the pore may move independently. In Staphylococcus carnosus (strain TM300), this protein is Protein translocase subunit SecY.